The primary structure comprises 155 residues: Ribosome maturation factor RimP (155 aa).

The protein belongs to the RimP family.

The protein resides in the cytoplasm. Functionally, required for maturation of 30S ribosomal subunits. This Gloeothece citriformis (strain PCC 7424) (Cyanothece sp. (strain PCC 7424)) protein is Ribosome maturation factor RimP.